The chain runs to 440 residues: Glutamyl-tRNA reductase (440 aa).

Residues 40–43 (TCNR), serine 100, 105–107 (ERE), and glutamine 111 contribute to the substrate site. Catalysis depends on cysteine 41, which acts as the Nucleophile. 181–186 (GTGAYA) contacts NADP(+).

The protein belongs to the glutamyl-tRNA reductase family. As to quaternary structure, homodimer.

It carries out the reaction (S)-4-amino-5-oxopentanoate + tRNA(Glu) + NADP(+) = L-glutamyl-tRNA(Glu) + NADPH + H(+). It participates in porphyrin-containing compound metabolism; protoporphyrin-IX biosynthesis; 5-aminolevulinate from L-glutamyl-tRNA(Glu): step 1/2. Functionally, catalyzes the NADPH-dependent reduction of glutamyl-tRNA(Glu) to glutamate 1-semialdehyde (GSA). In Renibacterium salmoninarum (strain ATCC 33209 / DSM 20767 / JCM 11484 / NBRC 15589 / NCIMB 2235), this protein is Glutamyl-tRNA reductase.